Consider the following 1407-residue polypeptide: MKDLLKFLKAQTKTEEFDAIKIALASPDMIRSWSFGEVKKPETINYRTFKPERDGLFCARIFGPVKDYECLCGKYKRLKHRGVICEKCGVEVTQTKVRRERMGHIELASPTAHIWFLKSLPSRIGLLLDMPLRDIERVLYFESYVVIEGGMTNLERQQILTEEQYLDALEEFGDEFDAKMGAEAIQALLKSMDLEQECETLREELNETNSETKRKKLTKRIKLLEAFVQSGNKPEWMILTVLPVLPPDLRPLVPLDGGRFATSDLNDLYRRVINRNNRLKRLLDLAAPDIIVRNEKRMLQEAVDALLDNGRRGRAITGSNKRPLKSLADMIKGKQGRFRQNLLGKRVDYSGRSVITVGPYLRLHQCGLPKKMALELFKPFIYGKLELRGLATTIKAAKKMVEREEAVVWDILDEVIREHPVLLNRAPTLHRLGIQAFEPVLIEGKAIQLHPLVCAAYNADFDGDQMAVHVPLTLEAQLEARALMMSTNNILSPANGEPIIVPSQDVVLGLYYMTRDCVNAKGEGMVLTGPKEAERIYRAGLASLHARVKVRITEYEKDENGELVAHTSLKDTTVGRAILWMIVPKGLPFSIVNQALGKKAISKMLNTCYRILGLKPTVIFADQTMYTGFAYAARSGASVGIDDMVIPEKKHEIISEAEAEVAEIQEQFQSGLVTAGERYNKVIDIWAAANDRVSKAMMDNLQTETVVNRDGQEEQQVSFNSIYMMADSGARGSAAQIRQLAGMRGLMAKPDGSIIETPITANFREGLNVLQYFISTHGARKGLADTALKTANSGYLTRRLVDVAQDLVVTEDDCGTHEGILMTPVIEGGDVKEPLRDRVLGRVTAEDVLKPGTADILVPRNTLLHEQWCDLLEANSVDAVKVRSVVSCDTDFGVCAHCYGRDLARGHIINKGEAIGVIAAQSIGEPGTQLTMRTFHIGGAASRAAAESSIQVKNKGSIKLSNVKSVVNSSGKLVITSRNTELKLIDEFGRTKESYKVPYGAVMAKGDGEQVAGGETVANWDPHTMPVITEVSGFIRFTDMIDGQTITRQTDELTGLSSLVVLDSAERTTGGKDLRPALKIVDAQGNDVLIPGTDMPAQYFLPGKAIVQLEDGVQISSGDTLARIPQESGGTKDITGGLPRVADLFEARRPKEPAILAEIAGIVSFGKETKGKRRLVITPVDGSDPYEEMIPKWRQLNVFEGERVERGDVISDGPEAPHDILRLRGVHAVTRYIVNEVQDVYRLQGVKINDKHIEVIVRQMLRKATIESAGSSDFLEGEQVEYSRVKIANRELEANGKVGATFSRDLLGITKASLATESFISAASFQETTRVLTEAAVAGKRDELRGLKENVIVGRLIPAGTGYAYHQDRMRRRAAGEQPATPQVTAEDASASLAELLNAGLGGSDNE.

Positions 70, 72, 85, and 88 each coordinate Zn(2+). The Mg(2+) site is built by D460, D462, and D464. Zn(2+)-binding residues include C814, C888, C895, and C898.

This sequence belongs to the RNA polymerase beta' chain family. In terms of assembly, the RNAP catalytic core consists of 2 alpha, 1 beta, 1 beta' and 1 omega subunit. When a sigma factor is associated with the core the holoenzyme is formed, which can initiate transcription. The cofactor is Mg(2+). It depends on Zn(2+) as a cofactor.

It catalyses the reaction RNA(n) + a ribonucleoside 5'-triphosphate = RNA(n+1) + diphosphate. In terms of biological role, DNA-dependent RNA polymerase catalyzes the transcription of DNA into RNA using the four ribonucleoside triphosphates as substrates. In Salmonella paratyphi B (strain ATCC BAA-1250 / SPB7), this protein is DNA-directed RNA polymerase subunit beta'.